Consider the following 233-residue polypeptide: Octanoyltransferase (233 aa).

Residues 38–218 form the BPL/LPL catalytic domain; it reads AGGPDTLLLL…LVCDALDGVL (181 aa). A compositionally biased stretch (basic and acidic residues) spans 57–66; the sequence is RRTEPHERPL. The disordered stretch occupies residues 57–77; the sequence is RRTEPHERPLDGTPVVDTDRG. Residues 76–83, 148–150, and 161–163 each bind substrate; these read RGGKITWH, AIG, and GFA. The active-site Acyl-thioester intermediate is the Cys179.

It belongs to the LipB family.

It is found in the cytoplasm. The enzyme catalyses octanoyl-[ACP] + L-lysyl-[protein] = N(6)-octanoyl-L-lysyl-[protein] + holo-[ACP] + H(+). It participates in protein modification; protein lipoylation via endogenous pathway; protein N(6)-(lipoyl)lysine from octanoyl-[acyl-carrier-protein]: step 1/2. Its function is as follows. Catalyzes the transfer of endogenously produced octanoic acid from octanoyl-acyl-carrier-protein onto the lipoyl domains of lipoate-dependent enzymes. Lipoyl-ACP can also act as a substrate although octanoyl-ACP is likely to be the physiological substrate. The sequence is that of Octanoyltransferase from Mycobacterium avium (strain 104).